Reading from the N-terminus, the 138-residue chain is uncharacterized protein (138 aa).

This is an uncharacterized protein from Homo sapiens (Human).